A 181-amino-acid polypeptide reads, in one-letter code: Trafficking protein particle complex subunit 3 homolog (181 aa).

Cys-70 carries the S-palmitoyl cysteine lipid modification.

The protein belongs to the TRAPP small subunits family. BET3 subfamily. As to quaternary structure, homodimer. Part of the multisubunit TRAPP (transport protein particle) complex.

The protein resides in the golgi apparatus. Its subcellular location is the cis-Golgi network. It is found in the endoplasmic reticulum. In terms of biological role, may play a role in vesicular transport from endoplasmic reticulum to Golgi. Required for the systemic spread of the RNAi response. This Caenorhabditis elegans protein is Trafficking protein particle complex subunit 3 homolog (trpp-3).